The primary structure comprises 208 residues: Cytidylate kinase (208 aa).

An ATP-binding site is contributed by 7 to 15 (GPAASGKGT).

This sequence belongs to the cytidylate kinase family. Type 1 subfamily.

Its subcellular location is the cytoplasm. It catalyses the reaction CMP + ATP = CDP + ADP. The enzyme catalyses dCMP + ATP = dCDP + ADP. This chain is Cytidylate kinase, found in Xanthobacter autotrophicus (strain ATCC BAA-1158 / Py2).